We begin with the raw amino-acid sequence, 198 residues long: Recombination protein RecR (198 aa).

The segment at 57 to 72 (CSVCGRLTDDDPCSIC) adopts a C4-type zinc-finger fold. The Toprim domain occupies 80-175 (TTILVLEDSR…KVTRLARGLA (96 aa)).

It belongs to the RecR family.

In terms of biological role, may play a role in DNA repair. It seems to be involved in an RecBC-independent recombinational process of DNA repair. It may act with RecF and RecO. The polypeptide is Recombination protein RecR (Streptococcus pneumoniae (strain Hungary19A-6)).